The sequence spans 250 residues: Probable chemoreceptor glutamine deamidase CheD (250 aa).

This sequence belongs to the CheD family.

The catalysed reaction is L-glutaminyl-[protein] + H2O = L-glutamyl-[protein] + NH4(+). Probably deamidates glutamine residues to glutamate on methyl-accepting chemotaxis receptors (MCPs), playing an important role in chemotaxis. This Paraburkholderia xenovorans (strain LB400) protein is Probable chemoreceptor glutamine deamidase CheD.